The chain runs to 512 residues: ATP synthase subunit alpha (512 aa).

Residue 169–176 (GDRQTGKT) participates in ATP binding.

This sequence belongs to the ATPase alpha/beta chains family. In terms of assembly, F-type ATPases have 2 components, CF(1) - the catalytic core - and CF(0) - the membrane proton channel. CF(1) has five subunits: alpha(3), beta(3), gamma(1), delta(1), epsilon(1). CF(0) has three main subunits: a(1), b(2) and c(9-12). The alpha and beta chains form an alternating ring which encloses part of the gamma chain. CF(1) is attached to CF(0) by a central stalk formed by the gamma and epsilon chains, while a peripheral stalk is formed by the delta and b chains.

The protein localises to the cell inner membrane. The enzyme catalyses ATP + H2O + 4 H(+)(in) = ADP + phosphate + 5 H(+)(out). Produces ATP from ADP in the presence of a proton gradient across the membrane. The alpha chain is a regulatory subunit. The protein is ATP synthase subunit alpha of Leptothrix cholodnii (strain ATCC 51168 / LMG 8142 / SP-6) (Leptothrix discophora (strain SP-6)).